The chain runs to 985 residues: Probable oxidoreductase YjgC (985 aa).

The 2Fe-2S ferredoxin-type domain occupies 3–79; the sequence is GKKTITINGV…GDVIDTLSPD (77 aa). [2Fe-2S] cluster-binding residues include Cys37, Cys48, Cys51, and Cys63. Positions 79–119 constitute a 4Fe-4S His(Cys)3-ligated-type domain; sequence DVKKAQVIGMDKILYNHELYCTVCDYNNGGCEIHNTVKEMK. [4Fe-4S] cluster is bound by residues His95, Cys99, Cys102, Cys109, Cys148, Cys151, Cys154, Cys158, Cys191, Cys194, Cys197, Cys201, Cys265, Cys268, Cys272, and Cys300. 4Fe-4S ferredoxin-type domains lie at 139-170 and 182-211; these read PFYR…LTID and NDVP…EKGM. A 4Fe-4S Mo/W bis-MGD-type domain is found at 258 to 314; the sequence is IKKTKTVCTYCGVGCSFDVWTKGRDILKVEPQEEAPANGISTCVKGKFGWDFVNSEE.

The protein in the C-terminal section; belongs to the prokaryotic molybdopterin-containing oxidoreductase family. The cofactor is [2Fe-2S] cluster. [4Fe-4S] cluster is required as a cofactor. Requires Mo-bis(molybdopterin guanine dinucleotide) as cofactor.

In Bacillus subtilis (strain 168), this protein is Probable oxidoreductase YjgC (yjgC).